A 149-amino-acid polypeptide reads, in one-letter code: UPF0260 protein Pput_1301 (149 aa).

Belongs to the UPF0260 family.

The polypeptide is UPF0260 protein Pput_1301 (Pseudomonas putida (strain ATCC 700007 / DSM 6899 / JCM 31910 / BCRC 17059 / LMG 24140 / F1)).